The following is a 279-amino-acid chain: Large ribosomal subunit protein uL2 (279 aa).

2 disordered regions span residues 29–53 (PEKSLLRPLSKSGGRNNQGRITTRH) and 224–279 (VAMN…KKRK). Basic and acidic residues predominate over residues 253 to 268 (KEGRTRHPNKESDKLI). The span at 269 to 279 (VRRRNAGKKRK) shows a compositional bias: basic residues.

Belongs to the universal ribosomal protein uL2 family. In terms of assembly, part of the 50S ribosomal subunit. Forms a bridge to the 30S subunit in the 70S ribosome.

One of the primary rRNA binding proteins. Required for association of the 30S and 50S subunits to form the 70S ribosome, for tRNA binding and peptide bond formation. It has been suggested to have peptidyltransferase activity; this is somewhat controversial. Makes several contacts with the 16S rRNA in the 70S ribosome. This Leifsonia xyli subsp. xyli (strain CTCB07) protein is Large ribosomal subunit protein uL2.